The sequence spans 765 residues: MYSSNSRRAASILACIVSLTQLGFAQSPFPDCENGPLSKNAVCDTTLDPVTRAQALLAAMTLEEKINNTQYNSPGVPRLGLPAYNWWSEALHGVAGSPGVHFADSGNFSYATSFPSPITLGAAFDDDLVKQIATVIGTEGRAFGNAGHAGLDYWTPNINPYRDPRWGRGQETPGEDPFHTSRYVYHLIDGLQDGIGPEKPKIVATCKHFAGYDIEDWEGNERYAFDAVISDQDMAEYYFPPFKTCTRDAKVDAVMCSYNSVNGIPTCADPWLLQTVLREHWEWEGVGHWVTSDCGAIDNIYKDHKYVADGAHAAAVAVNAGTDLDCGSVYPQFLGSAISQGLLGNRTLDRALTRLYSSLVKLGYFDPAADQPYRSIGWSDVATPDAEQLAHTAAVEGTVLLKNDGTLPLKKNGTVAIVGPYANATTQLQGNYEGTAKYIHTMLSAAAQQGYKVKYAPGTGINSNSTSGFEQALNAAKGSDLVIYFGGIDHEVEAEALDRTSIAWPGNQLDLIQQLSDLKKPLVVVQFGGGQVDDSSLLSNAGVNGLLWAGYPSQAGGAAVFDILTGKTAPAGRLPVTQYPEEYVDQVPMTDMNLRPGPSNPGRTYRWYDKAVIPFGYGMHYTTFDVSWKRKNYGPYNTAAVKAENAVLETFSLQVKNTGKVTSDYVALVFLTTTDAGPKPYPIKTLVGYQRVKAIRPGERKVVDIDVTVGSVARTAANGDLVLYPGSYKLQVDVEKDYPTAGFKIAGKEVVLDHFPQPPRNATKA.

An N-terminal signal peptide occupies residues 1 to 25 (MYSSNSRRAASILACIVSLTQLGFA). Asn-67 and Asn-107 each carry an N-linked (GlcNAc...) asparagine glycan. Asp-293 is an active-site residue. N-linked (GlcNAc...) asparagine glycans are attached at residues Asn-345, Asn-412, Asn-423, Asn-464, and Asn-761.

Belongs to the glycosyl hydrolase 3 family.

The protein resides in the secreted. It catalyses the reaction Hydrolysis of (1-&gt;4)-beta-D-xylans, to remove successive D-xylose residues from the non-reducing termini.. Its pathway is glycan degradation; xylan degradation. Its function is as follows. Xylan 1,4-beta-xylosidase involved in the hydrolysis of xylan, a major structural heterogeneous polysaccharide found in plant biomass representing the second most abundant polysaccharide in the biosphere, after cellulose. This chain is Probable exo-1,4-beta-xylosidase bxlB (bxlB), found in Aspergillus terreus (strain NIH 2624 / FGSC A1156).